Reading from the N-terminus, the 374-residue chain is Aclacinomycin 10-hydroxylase RdmB (374 aa).

Residues Tyr-171, Gly-190, Glu-213, Asp-240, Phe-241, and Ser-255 each contribute to the S-adenosyl-L-methionine site.

Belongs to the class I-like SAM-binding methyltransferase superfamily. Cation-independent O-methyltransferase family. In terms of assembly, homodimer. Homotetramer in solution. Tetramers might not be very stable in solution.

The catalysed reaction is 15-demethylaclacinomycin T + AH2 + O2 = 10-decarboxymethylaclacinomycin T + A + CO2 + H2O. It carries out the reaction 10-carboxy-13-deoxycarminomycin + AH2 + O2 + H(+) = 10-hydroxy-13-deoxycarminomycin + A + CO2 + H2O. It catalyses the reaction 10-hydroxy-13-deoxycarminomycin + S-adenosyl-L-methionine = 10-hydroxy-13-deoxydaunorubicin + S-adenosyl-L-homocysteine + H(+). The protein operates within antibiotic biosynthesis; rhodomycin biosynthesis. Its pathway is antibiotic biosynthesis; aclacinomycin biosynthesis. The hydroxylation reaction requires S-adenosyl-L-methionine (SAM) as a cofactor. S-adenosine-L-homocysteine and sinefungin (a SAM analog) can also support the decarboxylative hydroxylation activity with 10-carboxy-13-deoxycarminomycin as substrate. SAM and its analogs are considered an essential structural ligand to maintain ternary structural integrity and the proper binding mode and orientation of electron-rich substrates during decarboxylative hydroxylation of C-10 by RdmB. Its function is as follows. Involved in the biosynthesis of anthracyclines, an important group of aromatic polyketide antibiotics used in cancer chemotherapy. Acts as a 10-hydroxylase to catalyze a decarboxylative hydroxylation reaction on anthracyclines. During biosynthesis of rhodomycin, it catalyzes the removal of the carboxylic group at the C-10 position of 15-demethoxy-epsilon-rhodomycin coupled to hydroxylation at the same C-10 position to yield beta-rhodomycin. In vitro, can also catalyze the removal of the carboxylic group at the C-10 position of 15-demethoxyaclacinomycin T coupled to hydroxylation at the same C-10 position to yield 10-decarboxymethylaclacinomycin T. It can also use 10-carboxy-13-deoxycarminomycin, an analog of 15-demethoxy-epsilon-rhodomycin, to yield 10-hydroxy-13-deoxycarminomycin. In addition to its hydroxylation activity, it can act in vitro as a S-adenosyl-L-methionine-dependent O-methyltransferase and catalyze the 4-O-methylation of 10-hydroxy-13-deoxycarminomycin to 10-hydroxy-13-deoxydaunorubicin. The triglycosyl group of anthracyclines prevents the methylation reaction. The polypeptide is Aclacinomycin 10-hydroxylase RdmB (Streptomyces purpurascens).